The following is a 634-amino-acid chain: Chaperone protein HtpG (634 aa).

The interval 1–342 is a; substrate-binding; it reads MSVETQKETL…SNDLSLNVSR (342 aa). The interval 343–559 is b; the sequence is EILQKDPVID…EQDLGLQMRQ (217 aa). The segment at 560–634 is c; it reads ILEASGQKVP…LNKLLVELSA (75 aa).

It belongs to the heat shock protein 90 family. In terms of assembly, homodimer.

The protein localises to the cytoplasm. In terms of biological role, molecular chaperone. Has ATPase activity. The chain is Chaperone protein HtpG from Pseudomonas paraeruginosa (strain DSM 24068 / PA7) (Pseudomonas aeruginosa (strain PA7)).